The primary structure comprises 437 residues: Enolase 1 (437 aa).

A Glycyl lysine isopeptide (Lys-Gly) (interchain with G-Cter in ubiquitin) cross-link involves residue K60. Phosphoserine occurs at positions 119 and 138. 2 residues coordinate substrate: H160 and E169. S188 carries the post-translational modification Phosphoserine. E212 functions as the Proton donor in the catalytic mechanism. Residue K243 forms a Glycyl lysine isopeptide (Lys-Gly) (interchain with G-Cter in ubiquitin) linkage. Mg(2+) is bound by residues D247 and E296. E296 is a binding site for substrate. The residue at position 313 (T313) is a Phosphothreonine. D321 lines the substrate pocket. D321 serves as a coordination point for Mg(2+). Position 324 is a phosphothreonine (T324). K346 serves as the catalytic Proton acceptor. Residue K358 forms a Glycyl lysine isopeptide (Lys-Gly) (interchain with G-Cter in ubiquitin) linkage. Substrate is bound by residues 373-376 (SHRS) and K397.

This sequence belongs to the enolase family. Homodimer. Mg(2+) serves as cofactor.

It is found in the cytoplasm. The catalysed reaction is (2R)-2-phosphoglycerate = phosphoenolpyruvate + H2O. It functions in the pathway carbohydrate degradation; glycolysis; pyruvate from D-glyceraldehyde 3-phosphate: step 4/5. The protein is Enolase 1 (ENO1) of Saccharomyces cerevisiae (strain ATCC 204508 / S288c) (Baker's yeast).